The chain runs to 550 residues: Membrane protein of ER body 2 (550 aa).

Residues 46 to 199 (EFRSKAAATA…SSDSEEKSNL (154 aa)) form a disordered region. 2 stretches are compositionally biased toward low complexity: residues 80 to 105 (SVSESTSSLFSDSDPIVLESTVSETG) and 112 to 121 (TGSNEENGNN). Positions 122-132 (WLESSSTNLPN) are enriched in polar residues. The stretch at 134-165 (ENKRQRNGEDCEIEEEEENNERSLSDSEEKSN) forms a coiled coil. Residues 143–152 (DCEIEEEEEN) show a composition bias toward acidic residues. Composition is skewed to basic and acidic residues over residues 153–166 (NERSLSDSEEKSNL) and 185–198 (KNERSSSDSEEKSN). A run of 4 helical transmembrane segments spans residues 374–394 (STMNILALAVANLAGGLIVLA), 425–445 (ILVAVMSYIFFGLIPPLVYAF), 458–478 (ISVFLGSLVCVILLGSIKVYV), and 500–520 (SIVVASCGISYVVGDIMGEYI). Positions 393-418 (LAQNFQDLRNSSDQEKDRYEELLGRR) form a coiled coil.

It belongs to the CCC1 family. As to quaternary structure, interacts directly or indirectly with NAI2.

The protein localises to the endoplasmic reticulum membrane. In terms of biological role, may sequester excess cytosolic iron and manganese into endoplasmic reticulum to reduce metal ion toxicity. Not essential for the accumulation of ER body components, including PYK10. In Arabidopsis thaliana (Mouse-ear cress), this protein is Membrane protein of ER body 2 (MEB2).